The chain runs to 586 residues: Monoterpene synthase TPS4, chloroplastic (586 aa).

A chloroplast-targeting transit peptide spans 1–47 (MAATRNLSLLAQSSQPWAGIYGSHGSPRPISSWLRRQSIAKTSYICM). Mg(2+) contacts are provided by aspartate 340, aspartate 344, aspartate 485, threonine 489, and glutamate 493. Positions 340–344 (DDIFD) match the DDXXD motif motif.

This sequence belongs to the terpene synthase family. Tpsg subfamily. Monomer. It depends on Mg(2+) as a cofactor.

Its subcellular location is the plastid. The protein resides in the chloroplast. The catalysed reaction is (2E)-geranyl diphosphate + H2O = (2E)-geraniol + diphosphate. It functions in the pathway secondary metabolite biosynthesis; terpenoid biosynthesis. Functionally, monoterpene synthase involved in the biosynthesis of volatile organic compounds. Mediates the conversion of (2E)-geranyl diphosphate (GPP) into the acyclic monoterpene, geraniol. Does not use (2E,6E)-farnesyl diphosphate (FPP) as substrate. This is Monoterpene synthase TPS4, chloroplastic from Cananga odorata (Ylang-ylang tree).